A 749-amino-acid polypeptide reads, in one-letter code: Soluble starch synthase 2-1, chloroplastic/amyloplastic (749 aa).

Residues 1 to 44 (MAAAAVSSLLAPSGSCYSPGCHSCWGPGPGGGRRLPSPRRRPIT) constitute a chloroplast transit peptide. Lys272 serves as a coordination point for ADP-alpha-D-glucose.

The protein belongs to the glycosyltransferase 1 family. Bacterial/plant glycogen synthase subfamily. As to expression, expressed in endosperm, leaves, and weakly in roots.

Its subcellular location is the plastid. It is found in the amyloplast. The protein resides in the chloroplast. It carries out the reaction [(1-&gt;4)-alpha-D-glucosyl](n) + ADP-alpha-D-glucose = [(1-&gt;4)-alpha-D-glucosyl](n+1) + ADP + H(+). Its pathway is glycan biosynthesis; starch biosynthesis. Its function is as follows. May be involved in starch synthesis in endosperm amyloplasts and contribute to the deposition of transient starch in chloroplasts of leaves. The protein is Soluble starch synthase 2-1, chloroplastic/amyloplastic (SSII-1) of Oryza sativa subsp. japonica (Rice).